The chain runs to 1363 residues: MQRGAALCLRLWLCLGLLDGLVSGYSMTPPTLNITEESHVIDTGDSLSISCRGQHPLEWAWPGAQEAPATGDKDSEDTGVVRDCEGTDARPYCKVLLLHEVHANDTGSYVCYYKYIKARIEGTTAASSYVFVRDFEQPFINKPDTLLVNRKDAMWVPCLVSIPGLNVTLRSQSSVLWPDGQEVVWDDRRGMLVSTPLLHDALYLQCETTWGDQDFLSNPFLVHITGNELYDIQLLPRKSLELLVGEKLVLNCTVWAEFNSGVTFDWDYPGKQAERGKWVPERRSQQTHTELSSILTIHNVSQHDLGSYVCKANNGIQRFRESTEVIVHENPFISVEWLKGPILEATAGDELVKLPVKLAAYPPPEFQWYKDGKALSGRHSPHALVLKEVTEASTGTYTLALWNSAAGLRRNISLELVVNVPPQIHEKEASSPSIYSRHSRQALTCTAYGVPLPLSIQWHWRPWTPCKMFAQRSLRRRQQQDLMPQCRDWRAVTTQDAVNPIESLDTWTEFVEGKNKTVSKLVIQNANVSAMYKCVVSNKVGQDERLIYFYVTTIPDGFTIESKPSEELLEGQPVLLSCQADSYKYEHLRWYRLNLSTLHDAHGNPLLLDCKNVHLFATPLAASLEEVAPGARHATLSLSIPRVAPEHEGHYVCEVQDRRSHDKHCHKKYLSVQALEAPRLTQNLTDLLVNVSDSLEMQCLVAGAHAPSIVWYKDERLLEEKSGVDLADSNQKLSIQRVREEDAGRYLCSVCNAKGCVNSSASVAVEGSEDKGSMEIVILVGTGVIAVFFWVLLLLIFCNMRRPAHADIKTGYLSIIMDPGEVPLEEQCEYLSYDASQWEFPRERLHLGRVLGYGAFGKVVEASAFGIHKGSSCDTVAVKMLKEGATASEHRALMSELKILIHIGNHLNVVNLLGACTKPQGPLMVIVEFCKYGNLSNFLRAKRDAFSPCAEKSPEQRGRFRAMVELARLDRRRPGSSDRVLFARFSKTEGGARRASPDQEAEDLWLSPLTMEDLVCYSFQVARGMEFLASRKCIHRDLAARNILLSESDVVKICDFGLARDIYKDPDYVRKGSARLPLKWMAPESIFDKVYTTQSDVWSFGVLLWEIFSLGASPYPGVQINEEFCQRLRDGTRMRAPELATPAIRRIMLNCWSGDPKARPAFSELVEILGDLLQGRGLQEEEEVCMAPRSSQSSEEGSFSQVSTMALHIAQADAEDSPPSLQRHSLAARYYNWVSFPGCLARGAETRGSSRMKTFEEFPMTPTTYKGSVDNQTDSGMVLASEEFEQIESRHRQESGFSCKGPGQNVAVTRAHPDSQGRRRRPERGARGGQVFYNSEYGELSEPSEEDHCSPSARVTFFTDNSY.

The N-terminal stretch at Met-1–Gly-24 is a signal peptide. The Extracellular portion of the chain corresponds to Tyr-25–Glu-775. Ig-like C2-type domains are found at residues Pro-30–Ser-127, Lys-151–Gln-213, Pro-219–Ile-326, Pro-331–Glu-415, Pro-422–Thr-552, Pro-555–Ser-671, and Pro-678–Ala-764. N-linked (GlcNAc...) asparagine glycans are attached at residues Asn-33, Asn-104, Asn-166, Asn-251, Asn-299, and Asn-411. 2 cysteine pairs are disulfide-bonded: Cys-51-Cys-111 and Cys-158-Cys-206. Residues Cys-252 and Cys-310 are joined by a disulfide bond. Intrachain disulfides connect Cys-445–Cys-534, Cys-466–Cys-486, and Cys-578–Cys-653. 5 N-linked (GlcNAc...) asparagine glycosylation sites follow: Asn-515, Asn-527, Asn-594, Asn-683, and Asn-690. A disulfide bridge links Cys-699 with Cys-751. Asn-758 carries N-linked (GlcNAc...) asparagine glycosylation. A helical membrane pass occupies residues Ile-776–Ile-796. Residues Phe-797 to Tyr-1363 lie on the Cytoplasmic side of the membrane. A phosphotyrosine; by SRC mark is found at Tyr-830, Tyr-833, and Tyr-853. Residues Leu-845 to Leu-1173 enclose the Protein kinase domain. ATP contacts are provided by residues Leu-851–Val-859 and Lys-879. Asp-1037 functions as the Proton acceptor in the catalytic mechanism. A Phosphotyrosine; by autocatalysis and SRC modification is found at Tyr-1063. A phosphotyrosine; by autocatalysis mark is found at Tyr-1068, Tyr-1230, Tyr-1231, and Tyr-1265. A disordered region spans residues His-1291 to Val-1331. Phosphotyrosine; by autocatalysis and SRC occurs at positions 1333 and 1337. Residue Tyr-1363 is modified to Phosphotyrosine; by autocatalysis.

Belongs to the protein kinase superfamily. Tyr protein kinase family. CSF-1/PDGF receptor subfamily. In terms of assembly, interacts with VEGFC and VEGFD. Monomer in the absence of bound VEGFC or VEGFD. Homodimer in the presence of bound VEGFC or VEGFD. Can also form a heterodimer with KDR. Interacts with PTPN14; the interaction is enhanced by stimulation with VEGFC. Interacts with CRK, GRB2, PTK2/FAK1, SHC1, PIK3R1 and PTPN11/SHP-2. Identified in a complex with SRC and ITGB1. Autophosphorylated on tyrosine residues upon ligand binding. Autophosphorylation occurs in trans, i.e. one subunit of the dimeric receptor phosphorylates tyrosine residues on the other subunit. Phosphorylation in response to H(2)O(2) is mediated by a process that requires SRC and PRKCD activity. Phosphorylation at Tyr-1068 is required for autophosphorylation at additional tyrosine residues. Phosphorylation at Tyr-1063 and Tyr-1337 is important for interaction with CRK and subsequent activation of MAPK8. Phosphorylation at Tyr-1230, Tyr-1231 and Tyr-1337 is important for interaction with GRB2 and subsequent activation of the AKT1 and MAPK1/ERK2 and/or MAPK3/ERK1 signaling pathways. In response to endothelial cell adhesion onto collagen, can also be phosphorylated in the absence of FLT4 kinase activity by SRC at Tyr-830, Tyr-833, Tyr-853, Tyr-1063, Tyr-1333, and Tyr-1337. In terms of tissue distribution, detected in endothelial cells (at protein level). Widely expressed. Detected in fetal spleen, lung and brain. Detected in adult liver, muscle, thymus, placenta, lung, testis, ovary, prostate, heart, and kidney.

The protein localises to the cell membrane. Its subcellular location is the cytoplasm. It is found in the nucleus. It localises to the secreted. The catalysed reaction is L-tyrosyl-[protein] + ATP = O-phospho-L-tyrosyl-[protein] + ADP + H(+). Present in an inactive conformation in the absence of bound ligand. Binding of VEGFC or VEGFD leads to dimerization and activation by autophosphorylation on tyrosine residues. Inhibited by MAZ51. In terms of biological role, tyrosine-protein kinase that acts as a cell-surface receptor for VEGFC and VEGFD, and plays an essential role in adult lymphangiogenesis and in the development of the vascular network and the cardiovascular system during embryonic development. Promotes proliferation, survival and migration of endothelial cells, and regulates angiogenic sprouting. Signaling by activated FLT4 leads to enhanced production of VEGFC, and to a lesser degree VEGFA, thereby creating a positive feedback loop that enhances FLT4 signaling. Modulates KDR signaling by forming heterodimers. The secreted isoform 3 may function as a decoy receptor for VEGFC and/or VEGFD and play an important role as a negative regulator of VEGFC-mediated lymphangiogenesis and angiogenesis. Binding of vascular growth factors to isoform 1 or isoform 2 leads to the activation of several signaling cascades; isoform 2 seems to be less efficient in signal transduction, because it has a truncated C-terminus and therefore lacks several phosphorylation sites. Mediates activation of the MAPK1/ERK2, MAPK3/ERK1 signaling pathway, of MAPK8 and the JUN signaling pathway, and of the AKT1 signaling pathway. Phosphorylates SHC1. Mediates phosphorylation of PIK3R1, the regulatory subunit of phosphatidylinositol 3-kinase. Promotes phosphorylation of MAPK8 at 'Thr-183' and 'Tyr-185', and of AKT1 at 'Ser-473'. The protein is Vascular endothelial growth factor receptor 3 (FLT4) of Homo sapiens (Human).